The sequence spans 247 residues: Mycofactocin precursor peptide peptidase (247 aa).

A divalent metal cation is bound by residues glutamate 38, histidine 40, aspartate 49, histidine 124, and glutamate 163.

The protein belongs to the creatininase superfamily. As to quaternary structure, homooctamer. It depends on Fe(2+) as a cofactor. Zn(2+) is required as a cofactor.

The enzyme catalyses [mycofactocin precursor peptide]-C-terminal glycyl-N-{5-[(4-hydroxyphenyl)methyl]-4,4-dimethyl-2-oxopyrrolidin-3-yl}acetamide + H2O = [mycofactocin precursor peptide]-C-terminal glycine + 3-amino-5-[(4-hydroxyphenyl)methyl]-4,4-dimethyl-2-pyrrolidin-2-one. Peptidase involved in the biosynthesis of the enzyme cofactor mycofactocin (MFT). Catalyzes cleavage of the MftC-modified MftA peptide to liberate its final two residues, which consist of a cross-linked valine-decarboxylated tyrosine dipeptide (named 3-amino-5-[(4-hydroxyphenyl)methyl]-4,4-dimethyl-2-pyrrolidin-2-one or ADHP). Is required for the in vivo ethanol assimilation in M.smegmatis. The chain is Mycofactocin precursor peptide peptidase from Mycolicibacterium smegmatis (strain ATCC 700084 / mc(2)155) (Mycobacterium smegmatis).